The primary structure comprises 132 residues: HLA class I histocompatibility antigen protein P5 (132 aa).

In terms of tissue distribution, expressed in lymphoid tissues; Detected in spleen as well as in B-cell lines, NK cell lines and activated lymphocytes.

The sequence is that of HLA class I histocompatibility antigen protein P5 (HCP5) from Homo sapiens (Human).